A 229-amino-acid polypeptide reads, in one-letter code: Acetylcholine-binding protein (229 aa).

Residues 1-19 (MRRNIFCLACLWIVQACLS) form the signal peptide. N-linked (GlcNAc...) asparagine glycosylation is present at Asn-85. The Ig-like domain occupies 114–217 (PEVLTPQLAR…PEAYEDVEVS (104 aa)). Cys-142 and Cys-155 are joined by a disulfide.

As to quaternary structure, homopentamer. In terms of processing, N-glycosylated. In terms of tissue distribution, expressed by glial cells.

The protein localises to the synaptic cleft. Its function is as follows. Binds to acetylcholine. Modulates neuronal synaptic transmission. In Lymnaea stagnalis (Great pond snail), this protein is Acetylcholine-binding protein.